The primary structure comprises 25 residues: Caerin-2.2 (25 aa).

This sequence belongs to the frog skin active peptide (FSAP) family. Caerin subfamily. In terms of tissue distribution, expressed by the skin parotoid and/or rostral glands.

The protein localises to the secreted. Antimicrobial peptide, that adopts an alpha helical conformation which can disrupt bacterial membranes. Each caerin displays a different antimicrobial specificity. This chain is Caerin-2.2, found in Ranoidea caerulea (Green tree frog).